A 62-amino-acid chain; its full sequence is Sperm protamine P1 (62 aa).

Residues 1-62 (MARYRHSRSR…RYSRRGRRRY (62 aa)) are disordered.

This sequence belongs to the protamine P1 family. In terms of tissue distribution, testis.

Its subcellular location is the nucleus. It is found in the chromosome. Functionally, protamines substitute for histones in the chromatin of sperm during the haploid phase of spermatogenesis. They compact sperm DNA into a highly condensed, stable and inactive complex. In Trichosurus vulpecula (Brush-tailed possum), this protein is Sperm protamine P1 (PRM1).